The sequence spans 1004 residues: NADH:acrylate oxidoreductase (1004 aa).

At Thr-455 the chain carries FMN phosphoryl threonine. Ala-508, Glu-527, Asn-535, Thr-536, Gly-540, Gly-541, and Asp-775 together coordinate FAD. Arg-834 functions as the Proton donor in the catalytic mechanism. FAD is bound by residues His-941, Glu-970, Ala-985, and Leu-986.

This sequence belongs to the FAD-dependent oxidoreductase 2 family. FRD/SDH subfamily. FAD is required as a cofactor. FMN serves as cofactor. In terms of processing, is flavinylated on Thr-455 by ApbE, encoded in a neighboring gene. Flavinylation is essential for catalytic activity.

It catalyses the reaction acrylate + NADH + H(+) = propanoate + NAD(+). Catalyzes the NADH-dependent reduction of acrylate to propanoate. The principal role of ARD in Vibrio seems to be the energy-saving detoxification of acrylate coming from the environment. May also use acrylate as the terminal electron acceptor for NADH regeneration at oxygen deficiency. NADPH cannot replace NADH as the electron donor. Is also able to reduce methacrylate in vitro, but with a much lower efficiency. The chain is NADH:acrylate oxidoreductase from Vibrio harveyi (Beneckea harveyi).